Consider the following 188-residue polypeptide: Elongation factor P (188 aa).

Lys-34 is modified (N6-(3,6-diaminohexanoyl)-5-hydroxylysine).

This sequence belongs to the elongation factor P family. Post-translationally, may be beta-lysylated on the epsilon-amino group of Lys-34 by the combined action of EpmA and EpmB, and then hydroxylated on the C5 position of the same residue by EpmC (if this protein is present). Lysylation is critical for the stimulatory effect of EF-P on peptide-bond formation. The lysylation moiety may extend toward the peptidyltransferase center and stabilize the terminal 3-CCA end of the tRNA. Hydroxylation of the C5 position on Lys-34 may allow additional potential stabilizing hydrogen-bond interactions with the P-tRNA.

It localises to the cytoplasm. Its pathway is protein biosynthesis; polypeptide chain elongation. Involved in peptide bond synthesis. Alleviates ribosome stalling that occurs when 3 or more consecutive Pro residues or the sequence PPG is present in a protein, possibly by augmenting the peptidyl transferase activity of the ribosome. Modification of Lys-34 is required for alleviation. The protein is Elongation factor P of Sodalis glossinidius (strain morsitans).